The chain runs to 324 residues: Aldo-keto reductase family 1 member C15 (324 aa).

Residues 24–26 (TFA) and D51 contribute to the NADP(+) site. Residue Y56 is the Proton donor of the active site. Position 118 (H118) interacts with substrate. NADP(+) contacts are provided by residues 167 to 168 (SN), Q191, 217 to 225 (YSALGSHRD), and 269 to 281 (LAKSFNEKRIKEN).

It belongs to the aldo/keto reductase family. Monomer. As to expression, expressed in lung, specifically in bronchiolar club cells, type II alveolar cells and epithelial cells of the duct of the bronchial gland (at protein level). Expressed in gastric parietal cells and in epithelial cells of the large intestine and colon (at protein level). Expressed in brown adipocytes (at protein level). Expressed in vascular endothelial cells (at protein level).

Its subcellular location is the cytoplasm. The catalysed reaction is (2E,6E)-farnesol + NADP(+) = (2E,6E)-farnesal + NADPH + H(+). The dehydrogenase activity is inhibited by 3',3'',5',5''-tetraiodophenolphthalein, phenolphthalein, genistein, quercetin, zearalenone and diethylstilbestrol. Catalyzes the NADPH-dependent reduction of a variety of substrates including aromatic and aliphatic aldehydes, quinones, ketones, dicarbonyl compounds and 17-ketosteroids. Catalyzes the NADP(+)-dependent oxidation of aromatic, alicyclic and aliphatic alcohols, and 17beta-hydroxysteroids. To a lesser extent, can also catalyze the reduction of some aldoses and ketoses and the oxidation of some sugar alcohols. In the stomach, lung and colon tissues, mediates the reduction of farnesal and geranylgeranial into farnesol and geranylgeraniol respectively. By reducing 4-hydroxy-2-nonenal (HNE), produced during lipid peroxidation, into 1,4-dihydro-2-nonene (DHN), protects vascular endothelial cells from damage elicited by oxidized lipoproteins. This Rattus norvegicus (Rat) protein is Aldo-keto reductase family 1 member C15.